Here is a 410-residue protein sequence, read N- to C-terminus: Gamma-glutamyl phosphate reductase (410 aa).

It belongs to the gamma-glutamyl phosphate reductase family.

Its subcellular location is the cytoplasm. It catalyses the reaction L-glutamate 5-semialdehyde + phosphate + NADP(+) = L-glutamyl 5-phosphate + NADPH + H(+). It participates in amino-acid biosynthesis; L-proline biosynthesis; L-glutamate 5-semialdehyde from L-glutamate: step 2/2. Catalyzes the NADPH-dependent reduction of L-glutamate 5-phosphate into L-glutamate 5-semialdehyde and phosphate. The product spontaneously undergoes cyclization to form 1-pyrroline-5-carboxylate. The chain is Gamma-glutamyl phosphate reductase from Campylobacter jejuni subsp. jejuni serotype O:2 (strain ATCC 700819 / NCTC 11168).